The sequence spans 268 residues: Tryptophan synthase alpha chain (268 aa).

Residues Glu49 and Asp60 each act as proton acceptor in the active site.

This sequence belongs to the TrpA family. Tetramer of two alpha and two beta chains.

The enzyme catalyses (1S,2R)-1-C-(indol-3-yl)glycerol 3-phosphate + L-serine = D-glyceraldehyde 3-phosphate + L-tryptophan + H2O. Its pathway is amino-acid biosynthesis; L-tryptophan biosynthesis; L-tryptophan from chorismate: step 5/5. Its function is as follows. The alpha subunit is responsible for the aldol cleavage of indoleglycerol phosphate to indole and glyceraldehyde 3-phosphate. The polypeptide is Tryptophan synthase alpha chain (Haemophilus influenzae (strain ATCC 51907 / DSM 11121 / KW20 / Rd)).